A 359-amino-acid polypeptide reads, in one-letter code: CDP-glucose 4,6-dehydratase (359 aa).

The protein belongs to the NAD(P)-dependent epimerase/dehydratase family. It depends on NAD(+) as a cofactor.

The catalysed reaction is CDP-D-glucose = CDP-4-dehydro-6-deoxy-D-glucose + H2O. It participates in nucleotide-sugar biosynthesis; CDP-3,6-dideoxy-D-mannose biosynthesis; CDP-3,6-dideoxy-D-mannose from CTP and alpha-D-glucose 1-phosphate: step 2/5. The protein operates within bacterial outer membrane biogenesis; LPS O-antigen biosynthesis. The protein is CDP-glucose 4,6-dehydratase (rfbG) of Salmonella typhimurium (strain LT2 / SGSC1412 / ATCC 700720).